We begin with the raw amino-acid sequence, 93 residues long: MFNVNEYFEGNVKSIAFDTAVGNSTLGVMAPGEYEFATSQHETMSVVSGAMTVLLPGESEWKTLTAGQVFTVDANVKFKAQVSVNTAYLCDYV.

It belongs to the nucleoside phosphorylase PpnP family.

It catalyses the reaction a purine D-ribonucleoside + phosphate = a purine nucleobase + alpha-D-ribose 1-phosphate. The catalysed reaction is adenosine + phosphate = alpha-D-ribose 1-phosphate + adenine. It carries out the reaction cytidine + phosphate = cytosine + alpha-D-ribose 1-phosphate. The enzyme catalyses guanosine + phosphate = alpha-D-ribose 1-phosphate + guanine. It catalyses the reaction inosine + phosphate = alpha-D-ribose 1-phosphate + hypoxanthine. The catalysed reaction is thymidine + phosphate = 2-deoxy-alpha-D-ribose 1-phosphate + thymine. It carries out the reaction uridine + phosphate = alpha-D-ribose 1-phosphate + uracil. The enzyme catalyses xanthosine + phosphate = alpha-D-ribose 1-phosphate + xanthine. Functionally, catalyzes the phosphorolysis of diverse nucleosides, yielding D-ribose 1-phosphate and the respective free bases. Can use uridine, adenosine, guanosine, cytidine, thymidine, inosine and xanthosine as substrates. Also catalyzes the reverse reactions. This is Pyrimidine/purine nucleoside phosphorylase from Pseudoalteromonas atlantica (strain T6c / ATCC BAA-1087).